Consider the following 115-residue polypeptide: NADH-ubiquinone oxidoreductase chain 3 (115 aa).

3 helical membrane-spanning segments follow: residues 3–23 (LMLT…IAFW), 55–75 (FFLV…LLPL), and 84–104 (LNTM…SLAY).

Belongs to the complex I subunit 3 family. In terms of assembly, core subunit of respiratory chain NADH dehydrogenase (Complex I) which is composed of 45 different subunits. Interacts with TMEM186. Interacts with TMEM242.

It is found in the mitochondrion inner membrane. It carries out the reaction a ubiquinone + NADH + 5 H(+)(in) = a ubiquinol + NAD(+) + 4 H(+)(out). Core subunit of the mitochondrial membrane respiratory chain NADH dehydrogenase (Complex I) which catalyzes electron transfer from NADH through the respiratory chain, using ubiquinone as an electron acceptor. Essential for the catalytic activity of complex I. The chain is NADH-ubiquinone oxidoreductase chain 3 from Equus asinus (Donkey).